The chain runs to 144 residues: Putative pre-16S rRNA nuclease (144 aa).

Belongs to the YqgF nuclease family.

It is found in the cytoplasm. Could be a nuclease involved in processing of the 5'-end of pre-16S rRNA. The polypeptide is Putative pre-16S rRNA nuclease (Ralstonia nicotianae (strain ATCC BAA-1114 / GMI1000) (Ralstonia solanacearum)).